Here is a 1122-residue protein sequence, read N- to C-terminus: Maestro heat-like repeat-containing protein family member 7 (1122 aa).

2 disordered regions span residues 1–144 (MALS…LSED) and 183–203 (SHTISRQSSQTPLLLPSNTSL). A compositionally biased stretch (low complexity) spans 33 to 65 (TTPRPTPDLTLAPLPAHGVALAPALHPALSPDP). 3 stretches are compositionally biased toward polar residues: residues 75–95 (DISNPNASGAATPSSIQINTA), 120–136 (PVPSLSSTQATVLSPEN), and 184–203 (HTISRQSSQTPLLLPSNTSL). N-linked (GlcNAc...) asparagine glycans are attached at residues asparagine 200, asparagine 210, asparagine 255, asparagine 267, and asparagine 296. The interval 246 to 265 (WNTGSKGSVNVTSNSQPRSG) is disordered. Serine 356 bears the Phosphoserine mark. Residues 363 to 385 (FRSPPEGTSEDAKANESEKRDHD) form a disordered region. The segment covering 372-385 (EDAKANESEKRDHD) has biased composition (basic and acidic residues). N-linked (GlcNAc...) asparagine glycosylation is found at asparagine 541 and asparagine 546. Helical transmembrane passes span 548-568 (TLVTLPFFVSSGFPTLGLLLG) and 722-742 (LLPISFLASSFMTEVVVALLM). HEAT repeat units lie at residues 913 to 950 (QELCRILYLLIPLLERGDERHKITATAFFVELFRMEQV), 992 to 1029 (TKVQGLLPSMVKSLKNMDGVLVMEAVHDLKTIFKGQAK), 1035 to 1072 (SVYIEMLQTLLPHFIDARETVRTSCINTYGKVVKKLRM), and 1080 to 1117 (EQLTSTLMPLLFIIQEGNAKVSQHFPLEFHTAGIFFLL).

It is found in the membrane. The sequence is that of Maestro heat-like repeat-containing protein family member 7 (Mroh7) from Rattus norvegicus (Rat).